The following is a 547-amino-acid chain: Chaperonin GroEL (547 aa).

ATP contacts are provided by residues 30–33 (TLGP), K51, 87–91 (DGTTT), G415, 479–481 (NAA), and D495.

It belongs to the chaperonin (HSP60) family. In terms of assembly, forms a cylinder of 14 subunits composed of two heptameric rings stacked back-to-back. Interacts with the co-chaperonin GroES.

The protein localises to the cytoplasm. The catalysed reaction is ATP + H2O + a folded polypeptide = ADP + phosphate + an unfolded polypeptide.. In terms of biological role, together with its co-chaperonin GroES, plays an essential role in assisting protein folding. The GroEL-GroES system forms a nano-cage that allows encapsulation of the non-native substrate proteins and provides a physical environment optimized to promote and accelerate protein folding. The polypeptide is Chaperonin GroEL (Bordetella pertussis (strain Tohama I / ATCC BAA-589 / NCTC 13251)).